Reading from the N-terminus, the 280-residue chain is Lysosome-associated membrane glycoprotein 5 (280 aa).

The signal sequence occupies residues 1–29 (MDLRVRTLLGGDRLRILLMFFHVMVQTVA). Residues 30 to 235 (EQEVENLSGL…PVDEQEQLEE (206 aa)) lie on the Extracellular side of the membrane. 4 N-linked (GlcNAc...) asparagine glycosylation sites follow: Asn35, Asn53, Asn102, and Asn127. A helical membrane pass occupies residues 236–256 (TLPLILGLILGLVIVITLVIY). Over 257–280 (HIHHKMTANQVQIPRDRSQYKHMG) the chain is Cytoplasmic.

It belongs to the LAMP family. Post-translationally, glycosylated. In brain, strongly expressed in the globus pallidus/ventral pallidum complex, the substantia nigra pars reticulata and the entopeduncular nucleus (at protein level). Expressed in the external plexiform layer of the olfactory bulb (at protein level). May be weakly expressed in neocortex and striatum (at protein level). Highly expressed in brain; not detected in other tissues tested. Detected in the cingulate cortex, cortical plate and caudate putamen. In neocortex, specifically expressed in neurons of layers II/III and V.

The protein localises to the cytoplasmic vesicle membrane. Its subcellular location is the cell membrane. It localises to the cell projection. It is found in the dendrite. The protein resides in the cytoplasmic vesicle. The protein localises to the secretory vesicle. Its subcellular location is the synaptic vesicle membrane. It localises to the growth cone membrane. It is found in the early endosome membrane. The protein resides in the recycling endosome. The protein localises to the endoplasmic reticulum-Golgi intermediate compartment membrane. Its subcellular location is the endosome membrane. Its function is as follows. Plays a role in short-term synaptic plasticity in a subset of GABAergic neurons in the brain. In Mus musculus (Mouse), this protein is Lysosome-associated membrane glycoprotein 5 (Lamp5).